A 232-amino-acid polypeptide reads, in one-letter code: Cytidylate kinase (232 aa).

An ATP-binding site is contributed by 11-19 (GPAGAGKST).

This sequence belongs to the cytidylate kinase family. Type 1 subfamily.

It localises to the cytoplasm. It carries out the reaction CMP + ATP = CDP + ADP. It catalyses the reaction dCMP + ATP = dCDP + ADP. This chain is Cytidylate kinase, found in Roseiflexus castenholzii (strain DSM 13941 / HLO8).